We begin with the raw amino-acid sequence, 160 residues long: F-box protein At1g15015 (160 aa).

The F-box domain maps to 1–44 (MDVTLPHHVVEDILERLPVKTLRKFKCVCSTWRSTIDSQRFKDR).

This is F-box protein At1g15015 from Arabidopsis thaliana (Mouse-ear cress).